A 60-amino-acid chain; its full sequence is Protein K12 (60 aa).

The sequence is that of Protein K12 (K12) from Human herpesvirus 8 type P (isolate GK18) (HHV-8).